We begin with the raw amino-acid sequence, 865 residues long: Aconitate hydratase B (865 aa).

Substrate is bound by residues arginine 191, 244–246, 414–416, and serine 498; these read SSR and QDT. [4Fe-4S] cluster contacts are provided by cysteine 710, cysteine 769, and cysteine 772. Residues arginine 791 and arginine 796 each contribute to the substrate site.

It belongs to the aconitase/IPM isomerase family. As to quaternary structure, monomer. AcnB can also form a homodimer. The monomer-homodimer transition is dependent on iron availability and the carboxymethylation of C-273 inhibits the dimer formation. Requires [4Fe-4S] cluster as cofactor.

It catalyses the reaction citrate = D-threo-isocitrate. The enzyme catalyses (2S,3R)-3-hydroxybutane-1,2,3-tricarboxylate = 2-methyl-cis-aconitate + H2O. Its pathway is organic acid metabolism; propanoate degradation. The protein operates within carbohydrate metabolism; tricarboxylic acid cycle; isocitrate from oxaloacetate: step 2/2. Functionally, involved in the catabolism of short chain fatty acids (SCFA) via the tricarboxylic acid (TCA)(acetyl degradation route) and the 2-methylcitrate cycle I (propionate degradation route). Catalyzes the reversible isomerization of citrate to isocitrate via cis-aconitate. Also catalyzes the hydration of 2-methyl-cis-aconitate to yield (2R,3S)-2-methylisocitrate. The apo form of AcnB functions as a RNA-binding regulatory protein. During oxidative stress inactive AcnB apo-enzyme without iron sulfur clusters binds the acnB mRNA 3' UTRs (untranslated regions), stabilizes acnB mRNA and increases AcnB synthesis, thus mediating a post-transcriptional positive autoregulatory switch. AcnB also decreases the stability of the sodA transcript. The polypeptide is Aconitate hydratase B (Escherichia coli (strain K12)).